The chain runs to 513 residues: rRNA N(6)-adenosine-methyltransferase ZCCHC4 (513 aa).

The Zn(2+) site is built by Cys40, His42, Cys64, Cys73, Cys125, Cys128, His140, and His143. The GRF-type zinc finger occupies 40 to 82 (CPHGPTLLFVKVTQGKEETRRFYACSACRDRKDCNFFQWEDEK). Residues 172-175 (QYLF), Arg202, Asp225, 243-244 (NM), and Asp276 each bind S-adenosyl-L-methionine. Residues 337–357 (QVDYDNHALYKHGKTGRKQSP) are regulatory loop. Zn(2+) contacts are provided by Cys380, Cys383, His393, Cys394, Cys397, Cys400, His410, Cys411, Cys414, Cys417, His424, Cys425, Cys428, Cys431, His436, and Cys438. In terms of domain architecture, DHHC spans 395 to 447 (ELCNSCTSKDGRKWNHCFLCKKCVKPSWIHCSICNHCAVPDHSCEGPKHGCFI). The CCHC-type zinc-finger motif lies at 443-460 (HGCFICGELDHKRSTCPN). A compositionally biased stretch (basic residues) spans 466–481 (RANKAVRKQKQRKSNK). Residues 466-513 (RANKAVRKQKQRKSNKMKMETTKGQSMNHTSATRRKKRRERAHQYLGS) form a disordered region. Polar residues predominate over residues 487–496 (TKGQSMNHTS). Positions 497-506 (ATRRKKRRER) are enriched in basic residues.

The protein belongs to the ZCCHC4 family. In terms of assembly, interacts with components of the ASC-1 complex TRIP4, ASCC1, ASCC2 and ASCC3. Interact with AHCYL1 and AHCYL2. Interact with YTHDC2.

The protein localises to the nucleus. Its subcellular location is the nucleolus. The protein resides in the cytoplasm. The enzyme catalyses adenosine(4220) in 28S rRNA + S-adenosyl-L-methionine = N(6)-methyladenosine(4220) in 28S rRNA + S-adenosyl-L-homocysteine + H(+). Its function is as follows. rRNA N6-methyltransferase that specifically methylates the adenine in position 4220 of 28S rRNA. N6-methylation of adenine(4220) in 28S rRNA is required for translation. The polypeptide is rRNA N(6)-adenosine-methyltransferase ZCCHC4 (Homo sapiens (Human)).